Reading from the N-terminus, the 388-residue chain is MTEGDSARQVRQQLREQGLTPLEVNETTEKAKREANRFVLFRRGASTSELALITRQLATLVGAGLTIEEALRAVAEQCEKAHLRSLVATVRSKVVEGYSLADSLGAFPHVFDQLFRSMVAAGEKSGHLEKVLNRLADYTEQRQHMRTKLLQAMIYPIVLTLVAVGVISILLTAVVPKVVAQFEHMGQQLPATTRFLIGTSELMQHYGLWFLLLLFIGGFVWRWWLTDEKRRRHWHQVVLRLPVIGRVSRGLNTARFARTLSILNASAVPLLEGMKIAGEVLSNDFARTRIGEATERVREGTSLRKALDETKIFPPMMLHMIASGEQSGELDSMLERAADNQDREFETQVNIALGVFEPLLVVSMAGVVLFIVMSILQPILELNNMVNL.

The segment at 1–28 (MTEGDSARQVRQQLREQGLTPLEVNETT) is disordered. At 1–153 (MTEGDSARQV…HMRTKLLQAM (153 aa)) the chain is on the cytoplasmic side. Ca(2+) is bound by residues glutamate 79, asparagine 133, and aspartate 137. A helical transmembrane segment spans residues 154 to 174 (IYPIVLTLVAVGVISILLTAV). The Periplasmic portion of the chain corresponds to 175–205 (VPKVVAQFEHMGQQLPATTRFLIGTSELMQH). Residues 206-226 (YGLWFLLLLFIGGFVWRWWLT) form a helical membrane-spanning segment. Residues 227-350 (DEKRRRHWHQ…QDREFETQVN (124 aa)) are Cytoplasmic-facing. The helical transmembrane segment at 351–371 (IALGVFEPLLVVSMAGVVLFI) threads the bilayer. At 372–388 (VMSILQPILELNNMVNL) the chain is on the periplasmic side.

The protein belongs to the GSP F family. Type II secretion system is composed of four main components: the outer membrane complex, the inner membrane complex, the cytoplasmic secretion ATPase and the periplasm-spanning pseudopilus. Homodimer. Interacts with ExeE and ExeL components.

The protein localises to the cell inner membrane. Its function is as follows. Component of the type II secretion system inner membrane complex required for the energy-dependent secretion of extracellular factors such as proteases and toxins from the periplasm. The sequence is that of Type II secretion system protein F (exeF) from Aeromonas hydrophila.